The sequence spans 70 residues: Venom antimicrobial peptide-6 (70 aa).

Residues 1-23 (MKSQTFFLLFLVVFLLAITQSEA) form the signal peptide. Phe-36 bears the Phenylalanine amide mark. Positions 40-70 (SLRDMDTMKYLYDPSLSAADLKTLQKLMENY) are excised as a propeptide.

It belongs to the non-disulfide-bridged peptide (NDBP) superfamily. Short antimicrobial peptide (group 4) family. In terms of tissue distribution, expressed by the venom gland.

Its subcellular location is the secreted. The protein localises to the target cell membrane. Amphipathic peptide that exhibits extensive cytolytic activities against both prokaryotic and eukaryotic cells. Is more potent against Gram-positive bacteria (lethal concentration (LC)=0.25-2.9 uM) than against Gram-negative bacteria (LC=6.2-&gt;50 uM), and fungi ((LC)=14.1-&gt;50 uM). Shows hemolytic activity against rabbit erythrocytes (37.7% of inhibition at 6.25 uM) and cytolysis against rat dorsal root ganglions. In vivo, intravenous injection into mice tail provokes uncomfortable symptoms with a death rate of 12.5%. This Mesobuthus eupeus (Lesser Asian scorpion) protein is Venom antimicrobial peptide-6.